The following is a 214-amino-acid chain: Cutinase CUT2 (214 aa).

An N-terminal signal peptide occupies residues 1–18 (MQFSLSIATAILAATASA). Cysteines 40 and 117 form a disulfide. Catalysis depends on serine 128, which acts as the Nucleophile. Residues cysteine 179 and cysteine 186 are joined by a disulfide bond. Aspartate 183 is a catalytic residue. Histidine 196 functions as the Proton donor/acceptor in the catalytic mechanism.

The protein belongs to the cutinase family. In terms of processing, the 2 disulfide bonds play a critical role in holding the catalytic residues in juxta-position; reduction of the disulfide bridges results in the complete inactivation of the enzyme.

It is found in the secreted. It carries out the reaction cutin + H2O = cutin monomers.. Its function is as follows. Catalyzes the hydrolysis of complex carboxylic polyesters found in the cell wall of plants. Degrades cutin, a macromolecule that forms the structure of the plant cuticle. Required for efficient penetration of the host plant cuticle by the appressorium during the initial stage of fungal infection. The sequence is that of Cutinase CUT2 from Pyricularia oryzae (strain 70-15 / ATCC MYA-4617 / FGSC 8958) (Rice blast fungus).